We begin with the raw amino-acid sequence, 28 residues long: Phospholipase A2 (28 aa).

Position 28 (Gly28) interacts with Ca(2+).

Ca(2+) is required as a cofactor. As to expression, expressed by the venom gland.

The protein localises to the secreted. It carries out the reaction a 1,2-diacyl-sn-glycero-3-phosphocholine + H2O = a 1-acyl-sn-glycero-3-phosphocholine + a fatty acid + H(+). In terms of biological role, PLA2 catalyzes the calcium-dependent hydrolysis of the 2-acyl groups in 3-sn-phosphoglycerides. This Scolopendra dehaani (Thai centipede) protein is Phospholipase A2.